The primary structure comprises 344 residues: [LysW]-L-2-aminoadipate 6-phosphate reductase (344 aa).

Residues 12–15 (SGYA), 36–38 (SRR), and Leu75 contribute to the NADP(+) site. The active site involves Cys148. Residues Ser180, Ala184, and Asn312 each coordinate NADP(+).

It belongs to the NAGSA dehydrogenase family. Type 1 subfamily. LysY sub-subfamily. Homotetramer. Interacts with LysW. May form a ternary complex with LysW and LysZ.

It localises to the cytoplasm. It carries out the reaction [amino-group carrier protein]-C-terminal-N-(1-carboxy-5-oxopentan-1-yl)-L-glutamine + phosphate + NADP(+) = [amino-group carrier protein]-C-terminal-N-(1-carboxy-5-phosphooxy-5-oxopentan-1-yl)-L-glutamine + NADPH + H(+). It participates in amino-acid biosynthesis; L-lysine biosynthesis via AAA pathway; L-lysine from L-alpha-aminoadipate (Thermus route): step 3/5. Its function is as follows. Catalyzes the NADPH-dependent reduction of [LysW]-aminoadipate 6-phosphate to yield [LysW]-aminoadipate 6-semialdehyde. The polypeptide is [LysW]-L-2-aminoadipate 6-phosphate reductase (Thermus thermophilus (strain ATCC BAA-163 / DSM 7039 / HB27)).